Consider the following 402-residue polypeptide: 1-deoxy-D-xylulose 5-phosphate reductoisomerase (402 aa).

NADPH-binding residues include T10, G11, S12, I13, N38, and N124. K125 serves as a coordination point for 1-deoxy-D-xylulose 5-phosphate. E126 contributes to the NADPH binding site. Position 150 (D150) interacts with Mn(2+). 4 residues coordinate 1-deoxy-D-xylulose 5-phosphate: S151, E152, S186, and H209. E152 is a Mn(2+) binding site. G215 serves as a coordination point for NADPH. 1-deoxy-D-xylulose 5-phosphate-binding residues include S222, N227, K228, and E231. Position 231 (E231) interacts with Mn(2+).

This sequence belongs to the DXR family. Requires Mg(2+) as cofactor. The cofactor is Mn(2+).

The enzyme catalyses 2-C-methyl-D-erythritol 4-phosphate + NADP(+) = 1-deoxy-D-xylulose 5-phosphate + NADPH + H(+). It functions in the pathway isoprenoid biosynthesis; isopentenyl diphosphate biosynthesis via DXP pathway; isopentenyl diphosphate from 1-deoxy-D-xylulose 5-phosphate: step 1/6. In terms of biological role, catalyzes the NADPH-dependent rearrangement and reduction of 1-deoxy-D-xylulose-5-phosphate (DXP) to 2-C-methyl-D-erythritol 4-phosphate (MEP). The polypeptide is 1-deoxy-D-xylulose 5-phosphate reductoisomerase (Vibrio vulnificus (strain YJ016)).